The sequence spans 461 residues: Propanal dehydrogenase (CoA-propanoylating) (461 aa).

The tract at residues 1-18 (MNTSELETLIRNILSEQL) is targets protein to the BMC.

Belongs to the EutE/PduP family. Interacts with PduK, probably with its BMC-containing N-terminus. Interacts with shell proteins PduA and PduJ, interacts with PduQ.

It localises to the bacterial microcompartment. The enzyme catalyses propanal + NAD(+) + CoA = propanoyl-CoA + NADH + H(+). The protein operates within polyol metabolism; 1,2-propanediol degradation. Functionally, a CoA-acylating aldehyde dehydrogenase required for optimal 1,2-propanediol (1,2-PD) degradation. Optimizes growth in the bacterial microcompartment (BMC) dedicated to 1,2-PD degradation by minimizing propionaldehyde toxicity. NAD(+) and NADH are regenerated internally within the Pdu BMC by the PduP and PduQ enzymes, which reduce NAD(+) and oxidize NADH respectively, although there must also be cofactor transport across the BMC. Directly targeted to the BMC. Expression of a cosmid containing the full 21-gene pdu operon in E.coli allows E.coli to grow on 1,2-propanediol (1,2-PD) with the appearance of bacterial microcompartments (BMC) in its cytoplasm. In terms of biological role, the 1,2-PD-specific bacterial microcompartment (BMC) concentrates low levels of 1,2-PD catabolic enzymes, concentrates volatile reaction intermediates thus enhancing pathway flux and keeps the level of toxic, mutagenic propionaldehyde low. This chain is Propanal dehydrogenase (CoA-propanoylating), found in Citrobacter freundii.